Here is a 423-residue protein sequence, read N- to C-terminus: CinA-like protein (423 aa).

It belongs to the CinA family.

This chain is CinA-like protein, found in Chlorobium chlorochromatii (strain CaD3).